Consider the following 488-residue polypeptide: Cobyric acid synthase (488 aa).

Residues 250–438 (DITIAIIRLP…LHGIFDNGSW (189 aa)) form the GATase cobBQ-type domain. C331 serves as the catalytic Nucleophile. The active site involves H430.

The protein belongs to the CobB/CobQ family. CobQ subfamily.

Its pathway is cofactor biosynthesis; adenosylcobalamin biosynthesis. Its function is as follows. Catalyzes amidations at positions B, D, E, and G on adenosylcobyrinic A,C-diamide. NH(2) groups are provided by glutamine, and one molecule of ATP is hydrogenolyzed for each amidation. This Trichodesmium erythraeum (strain IMS101) protein is Cobyric acid synthase.